The primary structure comprises 164 residues: Thiol peroxidase (164 aa).

A Thioredoxin domain is found at 18 to 163 (INEGDFAPDF…FDAALAAYKN (146 aa)). C60 acts as the Cysteine sulfenic acid (-SOH) intermediate in catalysis. C60 and C93 are joined by a disulfide.

The protein belongs to the peroxiredoxin family. Tpx subfamily. In terms of assembly, homodimer.

It carries out the reaction a hydroperoxide + [thioredoxin]-dithiol = an alcohol + [thioredoxin]-disulfide + H2O. Thiol-specific peroxidase that catalyzes the reduction of hydrogen peroxide and organic hydroperoxides to water and alcohols, respectively. Plays a role in cell protection against oxidative stress by detoxifying peroxides. This Staphylococcus aureus (strain MRSA252) protein is Thiol peroxidase.